The following is a 285-amino-acid chain: Meiotically up-regulated gene 125 protein (285 aa).

The protein localises to the cytoplasm. Its subcellular location is the nucleus. In terms of biological role, has a role in meiosis. In Schizosaccharomyces pombe (strain 972 / ATCC 24843) (Fission yeast), this protein is Meiotically up-regulated gene 125 protein (mug125).